The primary structure comprises 56 residues: uncharacterized protein (56 aa).

The protein belongs to the archaeal ATPase family.

This is an uncharacterized protein from Methanocaldococcus jannaschii (strain ATCC 43067 / DSM 2661 / JAL-1 / JCM 10045 / NBRC 100440) (Methanococcus jannaschii).